A 138-amino-acid chain; its full sequence is Putative pre-16S rRNA nuclease (138 aa).

This sequence belongs to the YqgF nuclease family.

The protein localises to the cytoplasm. Its function is as follows. Could be a nuclease involved in processing of the 5'-end of pre-16S rRNA. The polypeptide is Putative pre-16S rRNA nuclease (Escherichia fergusonii (strain ATCC 35469 / DSM 13698 / CCUG 18766 / IAM 14443 / JCM 21226 / LMG 7866 / NBRC 102419 / NCTC 12128 / CDC 0568-73)).